Reading from the N-terminus, the 94-residue chain is Large ribosomal subunit protein eL42 (94 aa).

Zn(2+) is bound by residues Cys11, Cys14, Cys71, and Cys74. The C4-type zinc-finger motif lies at 11 to 74 (CPFCKRHTIH…LDLRFRCTVC (64 aa)).

Belongs to the eukaryotic ribosomal protein eL42 family. In terms of assembly, part of the 50S ribosomal subunit. The cofactor is Zn(2+).

Binds to the 23S rRNA. The sequence is that of Large ribosomal subunit protein eL42 from Thermococcus kodakarensis (strain ATCC BAA-918 / JCM 12380 / KOD1) (Pyrococcus kodakaraensis (strain KOD1)).